Reading from the N-terminus, the 300-residue chain is Cation-efflux pump FieF (300 aa).

Residues 24 to 44 (LLIKIFAWWYTGSVSILAALV) traverse the membrane as a helical segment. Residues Asp-45 and Asp-49 each coordinate Zn(2+). Transmembrane regions (helical) follow at residues 82–102 (AALAQSMFISGSALFLFLTSI) and 114–134 (PGVGIGVTVIALICTIILVTF). Zn(2+) contacts are provided by His-153 and Asp-157. 2 helical membrane-spanning segments follow: residues 156–176 (SDVMMNGAILIALGLSWYGWH) and 178–198 (ADALFALGIGIYILYSALRMG).

It belongs to the cation diffusion facilitator (CDF) transporter (TC 2.A.4) family. FieF subfamily. Homodimer.

The protein localises to the cell inner membrane. The catalysed reaction is Zn(2+)(in) + H(+)(out) = Zn(2+)(out) + H(+)(in). It catalyses the reaction Cd(2+)(in) + H(+)(out) = Cd(2+)(out) + H(+)(in). It carries out the reaction Fe(2+)(in) + H(+)(out) = Fe(2+)(out) + H(+)(in). Divalent metal cation transporter which exports Zn(2+), Cd(2+) and possibly Fe(2+). May be involved in zinc and iron detoxification by efflux. This Salmonella choleraesuis (strain SC-B67) protein is Cation-efflux pump FieF.